The chain runs to 230 residues: Ribose-5-phosphate isomerase A (230 aa).

Substrate contacts are provided by residues 32–35 (TGST), 85–88 (DGAD), and 98–101 (KGGG). The active-site Proton acceptor is the glutamate 107. Lysine 125 is a substrate binding site.

This sequence belongs to the ribose 5-phosphate isomerase family. As to quaternary structure, homodimer.

It carries out the reaction aldehydo-D-ribose 5-phosphate = D-ribulose 5-phosphate. The protein operates within carbohydrate degradation; pentose phosphate pathway; D-ribose 5-phosphate from D-ribulose 5-phosphate (non-oxidative stage): step 1/1. Functionally, catalyzes the reversible conversion of ribose-5-phosphate to ribulose 5-phosphate. The sequence is that of Ribose-5-phosphate isomerase A from Burkholderia vietnamiensis (strain G4 / LMG 22486) (Burkholderia cepacia (strain R1808)).